Reading from the N-terminus, the 387-residue chain is MKILADENMPYVEQLFGDLGTIEAVNGRTLTSEQVKDADVLLVRSVTKVNQALLSLNTNLKFVGSATIGTDHIDQSYLASQGIPFTNAPGCNATAVGEFAFIAMLELAKRFDTELKGKVVGIVGAGNTGSAVAKCLEAYGVEVLLNDPLIEADDPRTFVSLEALTERADVISLHVPLTKDGAHKTWYLFDEQRLQNLKPDTWLLNCCRGEVIDNRALIKIKAQRPDIKLVLDVWEGEPEPMLELVPFVELATPHIAGYSLEGKARGTYMLYQKLMAVLGIDADKSMTSLLPTLWSQQVSLDELPSEKALLQLSRFVYDLRDDDELFRKTLLDDSSIKAGENSANNNGFDLMRKNHKHRREFSALKLASAGQSDVDWLLNLGFSGVGR.

Residues Ser45 and Thr67 each coordinate substrate. Asp147 contacts NAD(+). The active site involves Arg208. An NAD(+)-binding site is contributed by Asp232. Glu237 is an active-site residue. The Proton donor role is filled by His254. Gly257 serves as a coordination point for NAD(+). Tyr258 contacts substrate.

The protein belongs to the D-isomer specific 2-hydroxyacid dehydrogenase family. PdxB subfamily. Homodimer.

Its subcellular location is the cytoplasm. It catalyses the reaction 4-phospho-D-erythronate + NAD(+) = (R)-3-hydroxy-2-oxo-4-phosphooxybutanoate + NADH + H(+). Its pathway is cofactor biosynthesis; pyridoxine 5'-phosphate biosynthesis; pyridoxine 5'-phosphate from D-erythrose 4-phosphate: step 2/5. In terms of biological role, catalyzes the oxidation of erythronate-4-phosphate to 3-hydroxy-2-oxo-4-phosphonooxybutanoate. This Shewanella sediminis (strain HAW-EB3) protein is Erythronate-4-phosphate dehydrogenase.